Reading from the N-terminus, the 253-residue chain is Vitamin B12 import ATP-binding protein BtuD (253 aa).

The 233-residue stretch at 4–236 folds into the ABC transporter domain; that stretch reads LQLSNVSVDT…NILSEVFEVD (233 aa). Position 32–39 (32–39) interacts with ATP; it reads GPNGAGKS.

It belongs to the ABC transporter superfamily. Vitamin B12 importer (TC 3.A.1.13.1) family. The complex is composed of two ATP-binding proteins (BtuD), two transmembrane proteins (BtuC) and a solute-binding protein (BtuF).

The protein localises to the cell inner membrane. It catalyses the reaction an R-cob(III)alamin(out) + ATP + H2O = an R-cob(III)alamin(in) + ADP + phosphate + H(+). Its function is as follows. Part of the ABC transporter complex BtuCDF involved in vitamin B12 import. Responsible for energy coupling to the transport system. In Yersinia enterocolitica serotype O:8 / biotype 1B (strain NCTC 13174 / 8081), this protein is Vitamin B12 import ATP-binding protein BtuD.